An 80-amino-acid polypeptide reads, in one-letter code: Large ribosomal subunit protein bL31B (80 aa).

It belongs to the bacterial ribosomal protein bL31 family. Type B subfamily. As to quaternary structure, part of the 50S ribosomal subunit.

The polypeptide is Large ribosomal subunit protein bL31B (Xanthomonas campestris pv. campestris (strain 8004)).